We begin with the raw amino-acid sequence, 777 residues long: Double zinc ribbon and ankyrin repeat-containing protein 1 (777 aa).

The segment covering 161–176 (QVGERTDPKTLKDLRF) has biased composition (basic and acidic residues). The interval 161-202 (QVGERTDPKTLKDLRFSESPLEIPAHSGGSGSRPPTRQSQSP) is disordered. Positions 193 to 202 (RPPTRQSQSP) are enriched in polar residues. Ser-201 carries the phosphoserine modification. 2 DZANK-type zinc fingers span residues 230-289 (CAHC…CVVC) and 358-406 (CSRC…GSCG). ANK repeat units follow at residues 442 to 473 (NIPL…LLAK) and 477 to 506 (EIAS…GYWR).

In terms of assembly, interacts with NINL. Associates with DYNC1H1 and multiple dynein intermediate and light chains as well as actin-binding proteins.

It localises to the cytoplasm. It is found in the cytoskeleton. The protein localises to the microtubule organizing center. The protein resides in the centrosome. Its subcellular location is the cilium basal body. Functionally, involved in vesicle transport in photoreceptor cells. This Macaca fascicularis (Crab-eating macaque) protein is Double zinc ribbon and ankyrin repeat-containing protein 1 (DZANK1).